Here is a 163-residue protein sequence, read N- to C-terminus: MADSSFDVVSKVDRQEVDNALHQAEKELNTRYDFRGTGAKIEWSGEDKIVLTAEAEERVKAALEVFKEKLIRRDISLKAFDAGEPVASGKTYKITGTLVQGIDAEHAKKISKKIRDEGPKGVKAQIQGDELRVSSKKRDDLQAVIALLKSEDFGIALQFVNYR.

It belongs to the YajQ family.

Functionally, nucleotide-binding protein. This chain is Nucleotide-binding protein NFA_51200, found in Nocardia farcinica (strain IFM 10152).